Here is a 74-residue protein sequence, read N- to C-terminus: Small ribosomal subunit protein bS18 (74 aa).

The protein belongs to the bacterial ribosomal protein bS18 family. As to quaternary structure, part of the 30S ribosomal subunit. Forms a tight heterodimer with protein bS6.

Its function is as follows. Binds as a heterodimer with protein bS6 to the central domain of the 16S rRNA, where it helps stabilize the platform of the 30S subunit. The chain is Small ribosomal subunit protein bS18 from Rhizorhabdus wittichii (strain DSM 6014 / CCUG 31198 / JCM 15750 / NBRC 105917 / EY 4224 / RW1) (Sphingomonas wittichii).